Reading from the N-terminus, the 741-residue chain is MSTPKIIYTLTDEAPALATYSLLPIIKAFTGSSGIAVETRDISLAGRLIATFPEYLTDTQKISDDLAELGKLATTPDANIIKLPNISASVPQLKAAIKELQQQGYKLPDYPEEPKTDTEKDVKARYDKIKGSAVNPVLREGNSDRRAPLSVKNYARKHPHKMGAWSADSKSHVAHMDNGDFYGSEKAALIGAPGSVKIELIAKDGSSTVLKAKTSVQAGEIIDSSVMSKNALRNFIAAEIEDAKKQGVLLSVHLKATMMKVSDPIMFGQIVSEFYKDALTKHAEVLKQIGFDVNNGIGDLYARIKTLPEAKQKEIEADIQAVYAQRPQLAMVNSDKGITNLHVPSDVIVDASMPAMIRDSGKMWGPDGKLHDTKAVIPDRCYAGVYQVVIEDCKQHGAFDPTTMGSVPNVGLMAQKAEEYGSHDKTFQIPADGVVRVTDESGKLLLEQSVEAGDIWRMCQAKDAPIQDWVKLAVNRARATNTPAVFWLDPARAHDAQVIAKVERYLKDYDTSGLDIRILSPVEATRFSLARIREGKDTISVTGNVLRDYLTDLFPIMELGTSAKMLSIVPLMSGGGLFETGAGGSAPKHVQQFLEEGYLRWDSLGEFLALAASLEHLGNAYKNPKALVLASTLDQATGKILDNNKSPARKVGEIDNRGSHFYLALYWAQALAAQTEDKELQAQFTGIAKALTDNETKIVGELAAAQGKPVDIAGYYHPNTDLTSKAIRPSATFNAALAPLA.

NADP(+) is bound by residues asparagine 85 and serine 87. Serine 132, asparagine 135, arginine 139, arginine 145, and lysine 255 together coordinate D-threo-isocitrate. Asparagine 135 serves as a coordination point for NADP(+). A Mn(2+)-binding site is contributed by aspartate 350. D-threo-isocitrate is bound by residues tyrosine 420 and arginine 547. Aspartate 548 is a Mn(2+) binding site. 5 residues coordinate NADP(+): serine 585, histidine 589, arginine 600, aspartate 602, and arginine 649.

Belongs to the monomeric-type IDH family. In terms of assembly, monomer. Mg(2+) serves as cofactor. Requires Mn(2+) as cofactor.

It is found in the cytoplasm. The catalysed reaction is D-threo-isocitrate + NADP(+) = 2-oxoglutarate + CO2 + NADPH. With respect to regulation, activity is inhibited in the presence of Ca(2+). Functionally, catalyzes the oxidative decarboxylation of isocitrate to 2-oxoglutarate and carbon dioxide with the concomitant reduction of NADP(+). This Azotobacter vinelandii protein is Isocitrate dehydrogenase [NADP].